We begin with the raw amino-acid sequence, 322 residues long: Extracellular metalloprotease AFUB_008060 (322 aa).

The signal sequence occupies residues 1–22; the sequence is MLPFNSCVYVLLIISLMSNCRA. 2 N-linked (GlcNAc...) asparagine glycosylation sites follow: N123 and N197. Residue H233 participates in Zn(2+) binding. E234 is a catalytic residue. H237 lines the Zn(2+) pocket. Cysteines 272 and 299 form a disulfide.

This sequence belongs to the peptidase M43B family.

The protein resides in the secreted. In terms of biological role, secreted metalloproteinase that allows assimilation of proteinaceous substrates. Plays a pivotal role as a pathogenicity determinant during infections and contributes to the ability of the pathogen to persist within the mammalian host. The chain is Extracellular metalloprotease AFUB_008060 from Aspergillus fumigatus (strain CBS 144.89 / FGSC A1163 / CEA10) (Neosartorya fumigata).